The sequence spans 115 residues: NADH-ubiquinone oxidoreductase chain 3 (115 aa).

3 helical membrane-spanning segments follow: residues Leu-3–Trp-23, Phe-55–Leu-75, and Leu-86–Trp-106.

This sequence belongs to the complex I subunit 3 family. Core subunit of respiratory chain NADH dehydrogenase (Complex I) which is composed of 45 different subunits. Interacts with TMEM186. Interacts with TMEM242.

Its subcellular location is the mitochondrion inner membrane. It carries out the reaction a ubiquinone + NADH + 5 H(+)(in) = a ubiquinol + NAD(+) + 4 H(+)(out). Functionally, core subunit of the mitochondrial membrane respiratory chain NADH dehydrogenase (Complex I) which catalyzes electron transfer from NADH through the respiratory chain, using ubiquinone as an electron acceptor. Essential for the catalytic activity of complex I. The chain is NADH-ubiquinone oxidoreductase chain 3 from Mammuthus primigenius (Siberian woolly mammoth).